The sequence spans 426 residues: Serine--tRNA ligase (426 aa).

230–232 (TSE) is an L-serine binding site. Residue 261 to 263 (RKE) coordinates ATP. An L-serine-binding site is contributed by Glu284. An ATP-binding site is contributed by 348–351 (EISS). Ser385 contributes to the L-serine binding site.

Belongs to the class-II aminoacyl-tRNA synthetase family. Type-1 seryl-tRNA synthetase subfamily. Homodimer. The tRNA molecule binds across the dimer.

Its subcellular location is the cytoplasm. It carries out the reaction tRNA(Ser) + L-serine + ATP = L-seryl-tRNA(Ser) + AMP + diphosphate + H(+). The enzyme catalyses tRNA(Sec) + L-serine + ATP = L-seryl-tRNA(Sec) + AMP + diphosphate + H(+). The protein operates within aminoacyl-tRNA biosynthesis; selenocysteinyl-tRNA(Sec) biosynthesis; L-seryl-tRNA(Sec) from L-serine and tRNA(Sec): step 1/1. Its function is as follows. Catalyzes the attachment of serine to tRNA(Ser). Is also able to aminoacylate tRNA(Sec) with serine, to form the misacylated tRNA L-seryl-tRNA(Sec), which will be further converted into selenocysteinyl-tRNA(Sec). The polypeptide is Serine--tRNA ligase (Wolbachia pipientis subsp. Culex pipiens (strain wPip)).